A 77-amino-acid polypeptide reads, in one-letter code: NEDD8-like protein RUB1 (77 aa).

The Ubiquitin-like domain maps to 1–74; it reads MIVKVKTLTG…MQLHLVLTLR (74 aa). A Glycyl lysine isopeptide (Gly-Lys) (interchain with K-? in acceptor proteins) cross-link involves residue glycine 76. Residue asparagine 77 is a propeptide.

Interacts with CDC53 and DCN1.

In terms of biological role, ubiquitin-like protein modifier that can be covalently attached to lysine residues of target proteins. Activated by the dimeric UBA3-ULA1 E1 enzyme and conjugated by the E2 UBC12 to substrate proteins. RUB1-conjugated (neddylated) substrate proteins include the cullins CDC53, RTT101 and CUL3, and the modification enhances the ubiquitin-ligase activity of the corresponding cullin-RING-based E3 ubiquitin-protein ligase complexes (CRLs). The chain is NEDD8-like protein RUB1 (RUB1) from Saccharomyces cerevisiae (strain ATCC 204508 / S288c) (Baker's yeast).